The chain runs to 240 residues: Putative peptidoglycan hydrolase Rv2525c (240 aa).

The tat-type signal signal peptide spans 1 to 33 (MSVSRRDVLKFAAATPGVLGLGVVASSLRAAPA).

In terms of processing, predicted to be exported by the Tat system. The position of the signal peptide cleavage has not been experimentally proven.

Its subcellular location is the secreted. It catalyses the reaction Hydrolysis of (1-&gt;4)-beta-linkages between N-acetylmuramic acid and N-acetyl-D-glucosamine residues in a peptidoglycan and between N-acetyl-D-glucosamine residues in chitodextrins.. It functions in the pathway cell wall degradation; peptidoglycan degradation. May function as a peptidoglycan hydrolase with glycosidase activity. In vitro, displays esterase activity toward p-nitrophenyl esters of various acyl chain length (C4 to C16), with a preference for p-nitrophenyl butyrate (C4). The protein is Putative peptidoglycan hydrolase Rv2525c of Mycobacterium tuberculosis (strain ATCC 25618 / H37Rv).